A 387-amino-acid polypeptide reads, in one-letter code: 3-ketoacyl-CoA thiolase (387 aa).

C91 serves as the catalytic Acyl-thioester intermediate. Active-site proton acceptor residues include H343 and C373.

Belongs to the thiolase-like superfamily. Thiolase family. As to quaternary structure, heterotetramer of two alpha chains (FadB) and two beta chains (FadA).

Its subcellular location is the cytoplasm. It catalyses the reaction an acyl-CoA + acetyl-CoA = a 3-oxoacyl-CoA + CoA. Its pathway is lipid metabolism; fatty acid beta-oxidation. In terms of biological role, catalyzes the final step of fatty acid oxidation in which acetyl-CoA is released and the CoA ester of a fatty acid two carbons shorter is formed. The protein is 3-ketoacyl-CoA thiolase of Escherichia coli O9:H4 (strain HS).